The primary structure comprises 419 residues: Tryptophan synthase beta chain (419 aa).

Residue lysine 98 is modified to N6-(pyridoxal phosphate)lysine.

The protein belongs to the TrpB family. In terms of assembly, tetramer of two alpha and two beta chains. Pyridoxal 5'-phosphate serves as cofactor.

It catalyses the reaction (1S,2R)-1-C-(indol-3-yl)glycerol 3-phosphate + L-serine = D-glyceraldehyde 3-phosphate + L-tryptophan + H2O. The protein operates within amino-acid biosynthesis; L-tryptophan biosynthesis; L-tryptophan from chorismate: step 5/5. Its function is as follows. The beta subunit is responsible for the synthesis of L-tryptophan from indole and L-serine. In Ruegeria sp. (strain TM1040) (Silicibacter sp.), this protein is Tryptophan synthase beta chain.